A 530-amino-acid polypeptide reads, in one-letter code: Probable cytochrome P450 519A1 (530 aa).

A helical membrane pass occupies residues 1 to 21; it reads MESIINLIFYIIIFLILIDFL. Cysteine 476 lines the heme pocket.

Belongs to the cytochrome P450 family. Heme is required as a cofactor.

The protein localises to the membrane. This Dictyostelium discoideum (Social amoeba) protein is Probable cytochrome P450 519A1 (cyp519A1).